The chain runs to 249 residues: Octanoyltransferase (249 aa).

Residues 1–23 are disordered; sequence MVNSPQNPRQDQRQDLDLTSFSA. The 185-residue stretch at 57 to 241 folds into the BPL/LPL catalytic domain; that stretch reads GEAPELVWLL…AFEELFGPTR (185 aa). Substrate is bound by residues 95–102, 170–172, and 183–185; these read RGGQLTYH, AIG, and GIA. The Acyl-thioester intermediate role is filled by Cys201.

This sequence belongs to the LipB family.

It is found in the cytoplasm. It carries out the reaction octanoyl-[ACP] + L-lysyl-[protein] = N(6)-octanoyl-L-lysyl-[protein] + holo-[ACP] + H(+). It participates in protein modification; protein lipoylation via endogenous pathway; protein N(6)-(lipoyl)lysine from octanoyl-[acyl-carrier-protein]: step 1/2. Its function is as follows. Catalyzes the transfer of endogenously produced octanoic acid from octanoyl-acyl-carrier-protein onto the lipoyl domains of lipoate-dependent enzymes. Lipoyl-ACP can also act as a substrate although octanoyl-ACP is likely to be the physiological substrate. This Bradyrhizobium diazoefficiens (strain JCM 10833 / BCRC 13528 / IAM 13628 / NBRC 14792 / USDA 110) protein is Octanoyltransferase.